We begin with the raw amino-acid sequence, 527 residues long: Catalase (527 aa).

The segment covering 1–22 (MADSRDPASDQMKLWKEQRAAQ) has biased composition (basic and acidic residues). A disordered region spans residues 1–34 (MADSRDPASDQMKLWKEQRAAQKPDVLTTGGGNP). At A2 the chain carries N-acetylalanine. S9 carries the post-translational modification Phosphoserine. Residue K13 is modified to N6-succinyllysine. Active-site residues include H75 and N148. H194, S201, R203, and N213 together coordinate NADP(+). An N6-succinyllysine modification is found at K221. Residue K233 is modified to N6-acetyllysine. NADP(+) contacts are provided by K237, W303, and H305. Y358 contacts heme. Phosphoserine occurs at positions 422 and 434. An N6-acetyllysine; alternate mark is found at K449 and K480. 2 positions are modified to N6-succinyllysine; alternate: K449 and K480. K499 bears the N6-acetyllysine mark. Position 511 is a phosphothreonine (T511). S517 carries the phosphoserine modification. The Microbody targeting signal; atypical signature appears at 524 to 527 (KANL).

The protein belongs to the catalase family. Homotetramer. Interacts (via microbody targeting signal) with PEX5, monomeric form interacts with PEX5, leading to its translocation into peroxisomes. Heme is required as a cofactor. Requires NADP(+) as cofactor.

It localises to the peroxisome matrix. The enzyme catalyses 2 H2O2 = O2 + 2 H2O. Functionally, catalyzes the degradation of hydrogen peroxide (H(2)O(2)) generated by peroxisomal oxidases to water and oxygen, thereby protecting cells from the toxic effects of hydrogen peroxide. Promotes growth of cells including T-cells, B-cells, myeloid leukemia cells, melanoma cells, mastocytoma cells and normal and transformed fibroblast cells. The polypeptide is Catalase (CAT) (Canis lupus familiaris (Dog)).